Consider the following 511-residue polypeptide: uncharacterized protein (511 aa).

The 33-residue stretch at 13-45 (IYDALNMLVYDYLLKMKYEGSAKIFFNEAGLEN) folds into the LisH domain. The disordered stretch occupies residues 172–212 (PRFEEQGVPPAKMAPKQFRDEGRSGNVESPSIATNQEGSSP). Over residues 197-210 (NVESPSIATNQEGS) the composition is skewed to polar residues.

This is an uncharacterized protein from Encephalitozoon cuniculi (strain GB-M1) (Microsporidian parasite).